The chain runs to 644 residues: Threonine--tRNA ligase (644 aa).

The TGS domain occupies 1–61 (MKVSIEGSVV…TACETLEPVY (61 aa)). The segment at 241-532 (DHRKLGTQLD…LTEHFAGAFP (292 aa)) is catalytic. 3 residues coordinate Zn(2+): C333, H384, and H509.

This sequence belongs to the class-II aminoacyl-tRNA synthetase family. In terms of assembly, homodimer. It depends on Zn(2+) as a cofactor.

Its subcellular location is the cytoplasm. It carries out the reaction tRNA(Thr) + L-threonine + ATP = L-threonyl-tRNA(Thr) + AMP + diphosphate + H(+). Catalyzes the attachment of threonine to tRNA(Thr) in a two-step reaction: L-threonine is first activated by ATP to form Thr-AMP and then transferred to the acceptor end of tRNA(Thr). Also edits incorrectly charged L-seryl-tRNA(Thr). The polypeptide is Threonine--tRNA ligase (Oleidesulfovibrio alaskensis (strain ATCC BAA-1058 / DSM 17464 / G20) (Desulfovibrio alaskensis)).